A 224-amino-acid polypeptide reads, in one-letter code: MSPAFNASPNQLTLALSKGRIFTETLPLLEAAGIRVTEDPETSRKLILPTSDPAVRVVIVRASDVPTYVQYGAADFGVAGKDVLMENGMAGLYAPIDLNIARCRMSVAVPAGFDYANAVRQGARLAVATKYVQTAREHFAKKGVHVDLIKLYGSMELGPLVGLSDAIVDLVSTGSTLRANNLVEVEEIVQISSRLVVNQAALKLKRERLAPILDAFERASAALA.

This sequence belongs to the ATP phosphoribosyltransferase family. Short subfamily. Heteromultimer composed of HisG and HisZ subunits.

It localises to the cytoplasm. It catalyses the reaction 1-(5-phospho-beta-D-ribosyl)-ATP + diphosphate = 5-phospho-alpha-D-ribose 1-diphosphate + ATP. Its pathway is amino-acid biosynthesis; L-histidine biosynthesis; L-histidine from 5-phospho-alpha-D-ribose 1-diphosphate: step 1/9. In terms of biological role, catalyzes the condensation of ATP and 5-phosphoribose 1-diphosphate to form N'-(5'-phosphoribosyl)-ATP (PR-ATP). Has a crucial role in the pathway because the rate of histidine biosynthesis seems to be controlled primarily by regulation of HisG enzymatic activity. This is ATP phosphoribosyltransferase from Cupriavidus taiwanensis (strain DSM 17343 / BCRC 17206 / CCUG 44338 / CIP 107171 / LMG 19424 / R1) (Ralstonia taiwanensis (strain LMG 19424)).